A 178-amino-acid polypeptide reads, in one-letter code: Fatty-acid and retinol-binding protein 1 (178 aa).

The first 16 residues, 1-16, serve as a signal peptide directing secretion; that stretch reads MYHQLILMALIGVIMA. N-linked (GlcNAc...) asparagine glycosylation is found at N44 and N75. 2 coiled-coil regions span residues 67–89 and 122–154; these read DAAL…ELRN and QKLD…LKAT. N157 is a glycosylation site (N-linked (GlcNAc...) asparagine).

Belongs to the fatty-acid and retinol-binding protein (FARBP) family. N-glycosylated.

The protein localises to the secreted. Its function is as follows. Binds retinol and different fatty acids. The sequence is that of Fatty-acid and retinol-binding protein 1 from Onchocerca ochengi (Filarial nematode worm).